The primary structure comprises 296 residues: Probable DNA-directed RNA polymerase III subunit RPC6 (296 aa).

It belongs to the eukaryotic RPC34/RPC39 RNA polymerase subunit family.

It localises to the nucleus. In terms of biological role, DNA-dependent RNA polymerase catalyzes the transcription of DNA into RNA using the four ribonucleoside triphosphates as substrates. Specific peripheric component of RNA polymerase III which synthesizes small RNAs, such as 5S rRNA and tRNAs. The polypeptide is Probable DNA-directed RNA polymerase III subunit RPC6 (Caenorhabditis elegans).